A 298-amino-acid chain; its full sequence is Quinolinate synthase (298 aa).

Iminosuccinate-binding residues include histidine 19 and serine 36. Cysteine 81 provides a ligand contact to [4Fe-4S] cluster. Iminosuccinate contacts are provided by residues tyrosine 107–asparagine 109 and serine 124. Residue cysteine 168 coordinates [4Fe-4S] cluster. Residues histidine 193–glutamate 195 and threonine 210 contribute to the iminosuccinate site. Cysteine 254 provides a ligand contact to [4Fe-4S] cluster.

The protein belongs to the quinolinate synthase family. Type 2 subfamily. Requires [4Fe-4S] cluster as cofactor.

The protein localises to the cytoplasm. The catalysed reaction is iminosuccinate + dihydroxyacetone phosphate = quinolinate + phosphate + 2 H2O + H(+). It participates in cofactor biosynthesis; NAD(+) biosynthesis; quinolinate from iminoaspartate: step 1/1. Functionally, catalyzes the condensation of iminoaspartate with dihydroxyacetone phosphate to form quinolinate. This chain is Quinolinate synthase, found in Thermotoga sp. (strain RQ2).